Reading from the N-terminus, the 1096-residue chain is Constitutive coactivator of PPAR-gamma-like protein 2 (1096 aa).

Over residues 35 to 59 (QQQHLHRQLPPTAALAPGAPRAARG) the composition is skewed to low complexity. 3 disordered regions span residues 35-113 (QQQH…PPQL), 508-579 (NYLP…DGEP), and 971-1096 (SRSS…RKED). Arg58 is subject to Omega-N-methylarginine. A compositionally biased stretch (basic residues) spans 82–95 (TRHHHPAHHFHHHG). Positions 101–113 (LHPPLPPPPPPQL) are enriched in pro residues. Positions 540–559 (HITEAFHHQPEWGNPNRDRG) are enriched in basic and acidic residues. Position 977 is an omega-N-methylarginine (Arg977). Composition is skewed to basic and acidic residues over residues 1041-1050 (IKEEKSDHRL) and 1076-1096 (NREK…RKED). Lys1042 is covalently cross-linked (Glycyl lysine isopeptide (Lys-Gly) (interchain with G-Cter in SUMO2)).

This sequence belongs to the constitutive coactivator of PPAR-gamma family. Expressed at low levels in a number of tissues.

The sequence is that of Constitutive coactivator of PPAR-gamma-like protein 2 (FAM120C) from Homo sapiens (Human).